A 313-amino-acid polypeptide reads, in one-letter code: Porphobilinogen deaminase (313 aa).

Cysteine 242 is modified (S-(dipyrrolylmethanemethyl)cysteine).

It belongs to the HMBS family. Monomer. Requires dipyrromethane as cofactor.

It catalyses the reaction 4 porphobilinogen + H2O = hydroxymethylbilane + 4 NH4(+). The protein operates within porphyrin-containing compound metabolism; protoporphyrin-IX biosynthesis; coproporphyrinogen-III from 5-aminolevulinate: step 2/4. Functionally, tetrapolymerization of the monopyrrole PBG into the hydroxymethylbilane pre-uroporphyrinogen in several discrete steps. This Klebsiella pneumoniae (strain 342) protein is Porphobilinogen deaminase.